The sequence spans 200 residues: uncharacterized protein (200 aa).

This is an uncharacterized protein from Treponema pallidum (strain Nichols).